Consider the following 433-residue polypeptide: Delta-aminolevulinic acid dehydratase, chloroplastic (433 aa).

A chloroplast-targeting transit peptide spans 1–56 (MASTFNIPCNAGTIKNFNNSQRNLGFSSNLGINFAKTRFSNCGDSGRIPSQLVVRA). The tract at residues 83-115 (NAPSAPPVPPTPKAPSGTPSVSPLSLGRRPRRN) is disordered. The span at 86–95 (SAPPVPPTPK) shows a compositional bias: pro residues. Lys301 acts as the Schiff-base intermediate with substrate in catalysis. Residues Arg311 and Lys323 each contribute to the 5-aminolevulinate site. Glu339 is a binding site for Mg(2+). Residue Lys354 is the Schiff-base intermediate with substrate of the active site. 5-aminolevulinate contacts are provided by Ser380 and Tyr419.

It belongs to the ALAD family. As to quaternary structure, homooctamer. The cofactor is Mg(2+).

The protein localises to the plastid. Its subcellular location is the chloroplast. It carries out the reaction 2 5-aminolevulinate = porphobilinogen + 2 H2O + H(+). It participates in porphyrin-containing compound metabolism; protoporphyrin-IX biosynthesis; coproporphyrinogen-III from 5-aminolevulinate: step 1/4. Functionally, catalyzes an early step in the biosynthesis of tetrapyrroles. Binds two molecules of 5-aminolevulinate per subunit, each at a distinct site, and catalyzes their condensation to form porphobilinogen. This chain is Delta-aminolevulinic acid dehydratase, chloroplastic (HEMB), found in Spinacia oleracea (Spinach).